We begin with the raw amino-acid sequence, 210 residues long: 7-carboxy-7-deazaguanine synthase (210 aa).

Substrate contacts are provided by residues 12-14 and Arg-27; that span reads LQG. Residues 18–210 form the Radical SAM core domain; the sequence is QAGRAAVFCR…LQTHKYIGIP (193 aa). Residues Cys-31, Cys-46, and Cys-49 each contribute to the [4Fe-4S] cluster site. Thr-51 contributes to the Mg(2+) binding site. A substrate-binding site is contributed by Thr-90. Residues Gly-92, 133-135, and 173-176 each bind S-adenosyl-L-methionine; these read SPK and QPMD. Pro-210 lines the substrate pocket.

This sequence belongs to the radical SAM superfamily. 7-carboxy-7-deazaguanine synthase family. As to quaternary structure, homodimer. [4Fe-4S] cluster is required as a cofactor. It depends on S-adenosyl-L-methionine as a cofactor. The cofactor is Mg(2+).

It carries out the reaction 6-carboxy-5,6,7,8-tetrahydropterin + H(+) = 7-carboxy-7-deazaguanine + NH4(+). It participates in purine metabolism; 7-cyano-7-deazaguanine biosynthesis. Catalyzes the complex heterocyclic radical-mediated conversion of 6-carboxy-5,6,7,8-tetrahydropterin (CPH4) to 7-carboxy-7-deazaguanine (CDG), a step common to the biosynthetic pathways of all 7-deazapurine-containing compounds. This Bordetella pertussis (strain Tohama I / ATCC BAA-589 / NCTC 13251) protein is 7-carboxy-7-deazaguanine synthase.